Consider the following 160-residue polypeptide: Twist-related protein 2 (160 aa).

Residues 1–63 (MEEGSSSPVS…GSPSAQSFEE (63 aa)) form a disordered region. Over residues 27–37 (KRFGRKRRYSK) the composition is skewed to basic residues. The region spanning 66–117 (SQRILANVRERQRTQSLNEAFAALRKIIPTLPSDKLSKIQTLKLAARYIDFL) is the bHLH domain.

As to quaternary structure, efficient DNA binding requires dimerization with another bHLH protein. Forms a heterodimer with TCF3/E12. Also interacts with MEF2C. As to expression, in the embryo, highly expressed in chondrogenic cells. In embryonic skin, expressed in the undifferentiated mesenchymal layer beneath the epidermis which later develops into the dermis. Expressed in early myeloid cells but not in lymphoid cells in the liver. Expression also detected in the secretory ependymal epithelium of the choroid plexus primordium. In the adult, expressed in secreting glandular tissues and tubules.

It localises to the nucleus. It is found in the cytoplasm. Binds to the E-box consensus sequence 5'-CANNTG-3' as a heterodimer and inhibits transcriptional activation by MYOD1, MYOG, MEF2A and MEF2C. Also represses expression of pro-inflammatory cytokines such as TNFA and IL1B. Involved in postnatal glycogen storage and energy metabolism. Inhibits the premature or ectopic differentiation of preosteoblast cells during osteogenesis, possibly by changing the internal signal transduction response of osteoblasts to external growth factors. The sequence is that of Twist-related protein 2 (TWIST2) from Homo sapiens (Human).